The primary structure comprises 352 residues: C-X-C chemokine receptor type 4 (352 aa).

The important for chemokine binding and signaling stretch occupies residues 1 to 21 (MEGISIYTSDNYTEEMGSGDY). The Extracellular segment spans residues 1-38 (MEGISIYTSDNYTEEMGSGDYDSIKEPCFREENAHFNR). Sulfotyrosine is present on Y7. The N-linked (GlcNAc...) asparagine glycan is linked to N11. Y12 is modified (sulfotyrosine). Residue S18 is glycosylated (O-linked (Xyl...) (chondroitin sulfate) serine). Y21 bears the Sulfotyrosine mark. Cystine bridges form between C28–C274 and C109–C186. A helical membrane pass occupies residues 39–63 (IFLPTIYSIIFLTGIVGNGLVILVM). Topologically, residues 64-77 (GYQKKLRSMTDKYR) are cytoplasmic. The chain crosses the membrane as a helical span at residues 78–99 (LHLSVADLLFVITLPFWAVDAV). The chemokine binding stretch occupies residues 94 to 97 (WAVD). Residues 100 to 110 (ANWYFGKFLCK) are Extracellular-facing. A helical membrane pass occupies residues 111–130 (AVHVIYTVNLYSSVLILAFI). A chemokine binding region spans residues 113–117 (HVIYT). Over 131–154 (SLDRYLAIVHATNSQRPRKLLAEK) the chain is Cytoplasmic. An Important for signaling motif is present at residues 133-135 (DRY). The involved in dimerization; when bound to chemokine stretch occupies residues 135–147 (YLAIVHATNSQRP). Residues 155–174 (VVYVGVWIPALLLTIPDFIF) form a helical membrane-spanning segment. The Extracellular segment spans residues 175 to 195 (ANVSEADDRYICDRFYPNDLW). Positions 186–190 (CDRFY) are chemokine binding, important for signaling. The tract at residues 191–210 (PNDLWVVVFQFQHIMVGLIL) is involved in dimerization. The chain crosses the membrane as a helical span at residues 196–216 (VVVFQFQHIMVGLILPGIVIL). The Cytoplasmic portion of the chain corresponds to 217–241 (SCYCIIISKLSHSKGHQKRKALKTT). Residues 242-261 (VILILAFFACWLPYYIGISI) form a helical membrane-spanning segment. The Extracellular portion of the chain corresponds to 262 to 282 (DSFILLEIIRQGCEFENTVHK). The involved in dimerization stretch occupies residues 266–268 (LLE). Residues 283–302 (WISITEALAFFHCCLNPILY) traverse the membrane as a helical segment. The Cytoplasmic segment spans residues 303–352 (AFLGAKFKTSAQHALTSVSRGSSLKILSKGKRGGHSSVSTESESSSFHSS). A phosphoserine mark is found at S319 and S321. Phosphoserine; by PKC and GRK6 is present on residues S324 and S325. A disordered region spans residues 329–352 (LSKGKRGGHSSVSTESESSSFHSS). S330 is subject to Phosphoserine; by GRK6. K331 is covalently cross-linked (Glycyl lysine isopeptide (Lys-Gly) (interchain with G-Cter in ubiquitin)). Over residues 337 to 352 (HSSVSTESESSSFHSS) the composition is skewed to low complexity. Residue S339 is modified to Phosphoserine; by GRK6. Residues S348 and S351 each carry the phosphoserine modification.

Belongs to the G-protein coupled receptor 1 family. Monomer. Can form homodimers. Interacts with CD164. Interacts with ARRB2; the interaction is dependent on the C-terminal phosphorylation of CXCR4 and allows activation of MAPK1 and MAPK3. Interacts with ARR3; the interaction is dependent on the C-terminal phosphorylation of CXCR4 and modulates calcium mobilization. Interacts with RNF113A; the interaction, enhanced by CXCL12, promotes CXCR4 ubiquitination and subsequent degradation. Interacts (via the cytoplasmic C-terminal) with ITCH (via the WW domains I and II); the interaction, enhanced by CXCL12, promotes CXCR4 ubiquitination and leads to its degradation. Interacts with extracellular ubiquitin. Interacts with DBN1; this interaction is enhanced by antigenic stimulation. Following LPS binding, may form a complex with GDF5, HSP90AA1 and HSPA8. Post-translationally, phosphorylated on agonist stimulation. Rapidly phosphorylated on serine and threonine residues in the C-terminal. Phosphorylation at Ser-324 and Ser-325 leads to recruitment of ITCH, ubiquitination and protein degradation. In terms of processing, ubiquitinated after ligand binding, leading to its degradation. Ubiquitinated by ITCH at the cell membrane on agonist stimulation. The ubiquitin-dependent mechanism, endosomal sorting complex required for transport (ESCRT), then targets CXCR4 for lysosomal degradation. This process is dependent also on prior Ser-/Thr-phosphorylation in the C-terminal of CXCR4. Also binding of ARRB1 to STAM negatively regulates CXCR4 sorting to lysosomes though modulating ubiquitination of SFR5S. Sulfation is required for efficient binding of CXCL12/SDF-1alpha and promotes its dimerization. Post-translationally, O- and N-glycosylated. N-glycosylation can mask coreceptor function. The O-glycosylation chondroitin sulfate attachment does not affect interaction with CXCL12/SDF-1alpha nor its coreceptor activity.

It is found in the cell membrane. It localises to the cell junction. Its subcellular location is the early endosome. The protein resides in the late endosome. The protein localises to the lysosome. Receptor for the C-X-C chemokine CXCL12/SDF-1 that transduces a signal by increasing intracellular calcium ion levels and enhancing MAPK1/MAPK3 activation. Involved in the AKT signaling cascade. Plays a role in regulation of cell migration, e.g. during wound healing. Acts as a receptor for extracellular ubiquitin; leading to enhanced intracellular calcium ions and reduced cellular cAMP levels. Binds bacterial lipopolysaccharide (LPS) et mediates LPS-induced inflammatory response, including TNF secretion by monocytes. Involved in hematopoiesis and in cardiac ventricular septum formation. Also plays an essential role in vascularization of the gastrointestinal tract, probably by regulating vascular branching and/or remodeling processes in endothelial cells. Involved in cerebellar development. In the CNS, could mediate hippocampal-neuron survival. The polypeptide is C-X-C chemokine receptor type 4 (CXCR4) (Saimiri sciureus (Common squirrel monkey)).